The following is a 308-amino-acid chain: Tetraacyldisaccharide 4'-kinase (308 aa).

Position 63–70 (63–70 (SFGGNGKT)) interacts with ATP.

The protein belongs to the LpxK family.

The enzyme catalyses a lipid A disaccharide + ATP = a lipid IVA + ADP + H(+). It functions in the pathway glycolipid biosynthesis; lipid IV(A) biosynthesis; lipid IV(A) from (3R)-3-hydroxytetradecanoyl-[acyl-carrier-protein] and UDP-N-acetyl-alpha-D-glucosamine: step 6/6. Transfers the gamma-phosphate of ATP to the 4'-position of a tetraacyldisaccharide 1-phosphate intermediate (termed DS-1-P) to form tetraacyldisaccharide 1,4'-bis-phosphate (lipid IVA). This chain is Tetraacyldisaccharide 4'-kinase, found in Campylobacter jejuni subsp. jejuni serotype O:23/36 (strain 81-176).